The sequence spans 504 residues: ATP synthase subunit alpha, chloroplastic (504 aa).

Residue Gly-169–Thr-176 coordinates ATP.

Belongs to the ATPase alpha/beta chains family. In terms of assembly, F-type ATPases have 2 components, CF(1) - the catalytic core - and CF(0) - the membrane proton channel. CF(1) has five subunits: alpha(3), beta(3), gamma(1), delta(1), epsilon(1). CF(0) has four main subunits: a, b, b' and c.

The protein localises to the plastid. It is found in the chloroplast thylakoid membrane. The catalysed reaction is ATP + H2O + 4 H(+)(in) = ADP + phosphate + 5 H(+)(out). In terms of biological role, produces ATP from ADP in the presence of a proton gradient across the membrane. The alpha chain is a regulatory subunit. The protein is ATP synthase subunit alpha, chloroplastic of Stigeoclonium helveticum (Green alga).